Consider the following 155-residue polypeptide: Interleukin-2 (155 aa).

The signal sequence occupies residues 1–20 (MYKMQLLSCIALTLVLVANS). T23 carries O-linked (GalNAc...) threonine glycosylation. C79 and C127 form a disulfide bridge.

Belongs to the IL-2 family.

Its subcellular location is the secreted. Cytokine produced by activated CD4-positive helper T-cells and to a lesser extend activated CD8-positive T-cells and natural killer (NK) cells that plays pivotal roles in the immune response and tolerance. Binds to a receptor complex composed of either the high-affinity trimeric IL-2R (IL2RA/CD25, IL2RB/CD122 and IL2RG/CD132) or the low-affinity dimeric IL-2R (IL2RB and IL2RG). Interaction with the receptor leads to oligomerization and conformation changes in the IL-2R subunits resulting in downstream signaling starting with phosphorylation of JAK1 and JAK3. In turn, JAK1 and JAK3 phosphorylate the receptor to form a docking site leading to the phosphorylation of several substrates including STAT5. This process leads to activation of several pathways including STAT, phosphoinositide-3-kinase/PI3K and mitogen-activated protein kinase/MAPK pathways. Functions as a T-cell growth factor and can increase NK-cell cytolytic activity as well. Promotes strong proliferation of activated B-cells and subsequently immunoglobulin production. Plays a pivotal role in regulating the adaptive immune system by controlling the survival and proliferation of regulatory T-cells, which are required for the maintenance of immune tolerance. Moreover, participates in the differentiation and homeostasis of effector T-cell subsets, including Th1, Th2, Th17 as well as memory CD8-positive T-cells. The protein is Interleukin-2 (IL2) of Halichoerus grypus (Gray seal).